Consider the following 374-residue polypeptide: Heme A synthase (374 aa).

The next 8 membrane-spanning stretches (helical) occupy residues 22 to 42 (VAVW…IGAI), 107 to 127 (LWGR…WVRG), 135 to 155 (PTLA…WFMV), 172 to 192 (LHLG…LGLL), 209 to 229 (AWAA…VAGI), 265 to 285 (AAVQ…VLSL), 306 to 326 (AAAT…VVWI), and 327 to 347 (PLAT…VWTL). A heme-binding site is contributed by histidine 271. Position 332 (histidine 332) interacts with heme.

This sequence belongs to the COX15/CtaA family. Type 2 subfamily. Interacts with CtaB. Heme b serves as cofactor.

It is found in the cell membrane. The catalysed reaction is Fe(II)-heme o + 2 A + H2O = Fe(II)-heme a + 2 AH2. Its pathway is porphyrin-containing compound metabolism; heme A biosynthesis; heme A from heme O: step 1/1. In terms of biological role, catalyzes the conversion of heme O to heme A by two successive hydroxylations of the methyl group at C8. The first hydroxylation forms heme I, the second hydroxylation results in an unstable dihydroxymethyl group, which spontaneously dehydrates, resulting in the formyl group of heme A. This chain is Heme A synthase, found in Rhodospirillum centenum (strain ATCC 51521 / SW).